A 260-amino-acid chain; its full sequence is Global transcriptional regulator CodY (260 aa).

Residues 1-159 (MPNLLEKTRK…SSTVVGIQLL (159 aa)) form a GAF domain region. Positions 207 to 226 (ASVIADRIGITRSVIVNALR) form a DNA-binding region, H-T-H motif.

The protein belongs to the CodY family.

The protein resides in the cytoplasm. Its function is as follows. DNA-binding global transcriptional regulator which is involved in the adaptive response to starvation and acts by directly or indirectly controlling the expression of numerous genes in response to nutrient availability. During rapid exponential growth, CodY is highly active and represses genes whose products allow adaptation to nutrient depletion. This is Global transcriptional regulator CodY from Streptococcus equi subsp. equi (strain 4047).